A 369-amino-acid chain; its full sequence is MIQILLSTFISFIIIIVSSNDIRSGENDNFNNNKMINNFLTTITTNDTIIIKETESPNDYDFSKEQIESLDKIVYFSSTMGIVGALFIIVSFFLFKAARTFATKMIFFLSLSDLFAAIFYLPYYRDSDIMCNLQGMGLVFFLSSSYLWTMCISISLFMVFFTTIFELNHWFKYFHFICWGIPLFTAIISLIFHAYGKTGSWCFISDPTSIFRLLYYLPLIVVFFINLVVFIAIRWKISQHSNSLVSRVNIIVSFYLIAFSLSQLPTIINSIQNFSDPDNPQFSLFAFQLLLQPLQGFLNCVVYGINEGFINHYVEFFEKYIFRCRCRKSRELKEIESDKTSLLVDYENSDDEEGFDGMDKLIIDDYNRV.

Over 1–4 (MIQI) the chain is Extracellular. The chain crosses the membrane as a helical span at residues 5-22 (LLSTFISFIIIIVSSNDI). Topologically, residues 23 to 72 (RSGENDNFNNNKMINNFLTTITTNDTIIIKETESPNDYDFSKEQIESLDK) are cytoplasmic. A helical transmembrane segment spans residues 73 to 93 (IVYFSSTMGIVGALFIIVSFF). Over 94–100 (LFKAART) the chain is Extracellular. Residues 101 to 121 (FATKMIFFLSLSDLFAAIFYL) form a helical membrane-spanning segment. Residues 122–146 (PYYRDSDIMCNLQGMGLVFFLSSSY) lie on the Cytoplasmic side of the membrane. The chain crosses the membrane as a helical span at residues 147–167 (LWTMCISISLFMVFFTTIFEL). Residues 168–173 (NHWFKY) lie on the Extracellular side of the membrane. The helical transmembrane segment at 174-194 (FHFICWGIPLFTAIISLIFHA) threads the bilayer. Residues 195–212 (YGKTGSWCFISDPTSIFR) are Cytoplasmic-facing. A helical transmembrane segment spans residues 213–233 (LLYYLPLIVVFFINLVVFIAI). Over 234-247 (RWKISQHSNSLVSR) the chain is Extracellular. A helical membrane pass occupies residues 248–268 (VNIIVSFYLIAFSLSQLPTII). At 269 to 369 (NSIQNFSDPD…KLIIDDYNRV (101 aa)) the chain is on the cytoplasmic side.

Belongs to the G-protein coupled receptor 5 family.

The protein localises to the membrane. Its function is as follows. Receptor for cAMP which may play a role in prestalk cell differentiation. May act as a negative regulator of cell growth. In Dictyostelium discoideum (Social amoeba), this protein is Cyclic AMP receptor-like protein A (crlA).